Here is a 193-residue protein sequence, read N- to C-terminus: MRLCDKDIEEWLERKELIIEPYPNKTLINGITVDIHLGNKFRFFYEHTGSCIDLSNSKIIGGLSLTEIMSNEIIFSKEQPCFLQPGSLVLCSTFESIKMPNNLVGWLDGRSSLARLGLMIHATAHRIDPGWNGNIVLEMFNAGKLTLVLRPKMRIAALSFEVLSQPVLRPYNLRKEAKYKIQNGVVPSRIHKE.

Residues 110 to 115 (RSSLAR), D128, 136 to 138 (VLE), Y171, K178, and Q182 contribute to the dCTP site. E138 functions as the Proton donor/acceptor in the catalytic mechanism.

This sequence belongs to the dCTP deaminase family. Homotrimer.

The catalysed reaction is dCTP + H2O + H(+) = dUTP + NH4(+). The protein operates within pyrimidine metabolism; dUMP biosynthesis; dUMP from dCTP (dUTP route): step 1/2. Its function is as follows. Catalyzes the deamination of dCTP to dUTP. This chain is dCTP deaminase, found in Buchnera aphidicola subsp. Acyrthosiphon pisum (strain APS) (Acyrthosiphon pisum symbiotic bacterium).